Reading from the N-terminus, the 392-residue chain is S-adenosylmethionine decarboxylase proenzyme (392 aa).

Catalysis depends on residues glutamate 43 and glutamate 46. Residue serine 100 is the Schiff-base intermediate with substrate; via pyruvic acid of the active site. The residue at position 100 (serine 100) is a Pyruvic acid (Ser); by autocatalysis. Cysteine 114 (proton donor; for catalytic activity) is an active-site residue. Catalysis depends on proton acceptor; for processing activity residues serine 264 and histidine 277.

This sequence belongs to the eukaryotic AdoMetDC family. The cofactor is pyruvate. Is synthesized initially as an inactive proenzyme. Formation of the active enzyme involves a self-maturation process in which the active site pyruvoyl group is generated from an internal serine residue via an autocatalytic post-translational modification. Two non-identical subunits are generated from the proenzyme in this reaction, and the pyruvate is formed at the N-terminus of the alpha chain, which is derived from the carboxyl end of the proenzyme. The post-translation cleavage follows an unusual pathway, termed non-hydrolytic serinolysis, in which the side chain hydroxyl group of the serine supplies its oxygen atom to form the C-terminus of the beta chain, while the remainder of the serine residue undergoes an oxidative deamination to produce ammonia and the pyruvoyl group blocking the N-terminus of the alpha chain.

The enzyme catalyses S-adenosyl-L-methionine + H(+) = S-adenosyl 3-(methylsulfanyl)propylamine + CO2. It participates in amine and polyamine biosynthesis; S-adenosylmethioninamine biosynthesis; S-adenosylmethioninamine from S-adenosyl-L-methionine: step 1/1. This chain is S-adenosylmethionine decarboxylase proenzyme, found in Leishmania infantum.